Here is a 98-residue protein sequence, read N- to C-terminus: Co-chaperonin GroES (98 aa).

The protein belongs to the GroES chaperonin family. Heptamer of 7 subunits arranged in a ring. Interacts with the chaperonin GroEL.

The protein localises to the cytoplasm. Its function is as follows. Together with the chaperonin GroEL, plays an essential role in assisting protein folding. The GroEL-GroES system forms a nano-cage that allows encapsulation of the non-native substrate proteins and provides a physical environment optimized to promote and accelerate protein folding. GroES binds to the apical surface of the GroEL ring, thereby capping the opening of the GroEL channel. The polypeptide is Co-chaperonin GroES (Clavibacter michiganensis subsp. michiganensis (strain NCPPB 382)).